The chain runs to 266 residues: 4-hydroxy-tetrahydrodipicolinate reductase (266 aa).

G10–M15 lines the NAD(+) pocket. An NADP(+)-binding site is contributed by K38. Residues G99–T101 and A125–F128 each bind NAD(+). Catalysis depends on H155, which acts as the Proton donor/acceptor. H156 is a (S)-2,3,4,5-tetrahydrodipicolinate binding site. K159 (proton donor) is an active-site residue. G165–T166 lines the (S)-2,3,4,5-tetrahydrodipicolinate pocket.

It belongs to the DapB family.

The protein localises to the cytoplasm. It catalyses the reaction (S)-2,3,4,5-tetrahydrodipicolinate + NAD(+) + H2O = (2S,4S)-4-hydroxy-2,3,4,5-tetrahydrodipicolinate + NADH + H(+). It carries out the reaction (S)-2,3,4,5-tetrahydrodipicolinate + NADP(+) + H2O = (2S,4S)-4-hydroxy-2,3,4,5-tetrahydrodipicolinate + NADPH + H(+). It participates in amino-acid biosynthesis; L-lysine biosynthesis via DAP pathway; (S)-tetrahydrodipicolinate from L-aspartate: step 4/4. Catalyzes the conversion of 4-hydroxy-tetrahydrodipicolinate (HTPA) to tetrahydrodipicolinate. This chain is 4-hydroxy-tetrahydrodipicolinate reductase, found in Bacillus cereus (strain ATCC 10987 / NRS 248).